The primary structure comprises 196 residues: Large ribosomal subunit protein bL17 (196 aa).

Positions 133 to 196 are disordered; it reads AAKRDADKKE…KPAAEEKDAK (64 aa). A compositionally biased stretch (basic and acidic residues) spans 134–143; sequence AKRDADKKEA. A compositionally biased stretch (acidic residues) spans 152-164; that stretch reads EVAETEAAPEAEA. Over residues 184–196 the composition is skewed to basic and acidic residues; that stretch reads AAEKPAAEEKDAK.

This sequence belongs to the bacterial ribosomal protein bL17 family. In terms of assembly, part of the 50S ribosomal subunit. Contacts protein L32.

This chain is Large ribosomal subunit protein bL17, found in Arthrobacter sp. (strain FB24).